A 187-amino-acid chain; its full sequence is Ribosome-recycling factor (187 aa).

It belongs to the RRF family.

It is found in the cytoplasm. Its function is as follows. Responsible for the release of ribosomes from messenger RNA at the termination of protein biosynthesis. May increase the efficiency of translation by recycling ribosomes from one round of translation to another. In Methylorubrum populi (strain ATCC BAA-705 / NCIMB 13946 / BJ001) (Methylobacterium populi), this protein is Ribosome-recycling factor.